A 224-amino-acid chain; its full sequence is Transcription factor MYB1 (224 aa).

HTH myb-type domains follow at residues 10 to 66 (LGRV…KPSI) and 67 to 117 (KRGH…YKKH). 2 consecutive DNA-binding regions (H-T-H motif) follow at residues 38 to 62 (WKRV…LNYL) and 90 to 113 (WSLI…NTHL).

Its subcellular location is the nucleus. Activates DODA1 and CYP76AD1 in the betalain red pigment pathway. The chain is Transcription factor MYB1 from Beta vulgaris (Sugar beet).